A 398-amino-acid polypeptide reads, in one-letter code: Probable elongation factor 1-gamma (398 aa).

Residues G66 to F199 form the GST C-terminal domain. The disordered stretch occupies residues A210–K248. Positions P211–K221 are enriched in basic and acidic residues. An EF-1-gamma C-terminal domain is found at S239–K398.

As to quaternary structure, EF-1 is composed of four subunits: alpha, beta, delta, and gamma. In terms of processing, AMPylated by fic-1.

Functionally, probably plays a role in anchoring the complex to other cellular components. The chain is Probable elongation factor 1-gamma from Caenorhabditis elegans.